The primary structure comprises 159 residues: Putative ribosomal RNA large subunit methyltransferase H (159 aa).

S-adenosyl-L-methionine contacts are provided by residues Leu76, Gly108, and 127-132; that span reads FSKMTF.

This sequence belongs to the RNA methyltransferase RlmH family.

The protein localises to the cytoplasm. It catalyses the reaction pseudouridine(1915) in 23S rRNA + S-adenosyl-L-methionine = N(3)-methylpseudouridine(1915) in 23S rRNA + S-adenosyl-L-homocysteine + H(+). Functionally, specifically methylates the pseudouridine at position 1915 (m3Psi1915) in 23S rRNA. This chain is Putative ribosomal RNA large subunit methyltransferase H, found in Methanococcus maripaludis (strain C7 / ATCC BAA-1331).